A 306-amino-acid polypeptide reads, in one-letter code: Ornithine carbamoyltransferase (306 aa).

Residues 53 to 56, Gln80, Arg104, and 131 to 134 each bind carbamoyl phosphate; these read STRT and HPCQ. L-ornithine is bound by residues Asn162, Asp219, and 223 to 224; that span reads SM. Carbamoyl phosphate is bound by residues 259–260 and Arg287; that span reads CL.

Belongs to the aspartate/ornithine carbamoyltransferase superfamily. OTCase family.

Its subcellular location is the cytoplasm. It catalyses the reaction carbamoyl phosphate + L-ornithine = L-citrulline + phosphate + H(+). It participates in amino-acid degradation; L-arginine degradation via ADI pathway; carbamoyl phosphate from L-arginine: step 2/2. Its function is as follows. Reversibly catalyzes the transfer of the carbamoyl group from carbamoyl phosphate (CP) to the N(epsilon) atom of ornithine (ORN) to produce L-citrulline. The chain is Ornithine carbamoyltransferase from Acinetobacter baumannii (strain AYE).